The sequence spans 412 residues: Probable serine/threonine-protein kinase PBL4 (412 aa).

G2 carries N-myristoyl glycine lipidation. A lipid anchor (S-palmitoyl cysteine) is attached at C4. The segment at 14–40 is disordered; sequence RESPYRGSSRISAKRSQSSRLSSLTIQ. Residues 21–40 are compositionally biased toward low complexity; sequence SSRISAKRSQSSRLSSLTIQ. Phosphothreonine is present on T72. A Protein kinase domain is found at 83 to 369; sequence FRPDSVIGEG…STLEELEMTL (287 aa). Residues 89-97 and K121 each bind ATP; that span reads IGEGGFGYV. Phosphotyrosine is present on Y167. D215 acts as the Proton acceptor in catalysis. S219 and S249 each carry phosphoserine. Phosphothreonine is present on residues T250 and T255. Y263 is modified (phosphotyrosine).

Belongs to the protein kinase superfamily. Ser/Thr protein kinase family.

It is found in the cell membrane. The enzyme catalyses L-seryl-[protein] + ATP = O-phospho-L-seryl-[protein] + ADP + H(+). The catalysed reaction is L-threonyl-[protein] + ATP = O-phospho-L-threonyl-[protein] + ADP + H(+). May be involved in plant defense signaling. The protein is Probable serine/threonine-protein kinase PBL4 of Arabidopsis thaliana (Mouse-ear cress).